The chain runs to 510 residues: NAD(P)H-quinone oxidoreductase subunit 2 A, chloroplastic (510 aa).

Transmembrane regions (helical) follow at residues 24–44 (LLLFNGSFIFPECILIFGLIL), 57–77 (TPWLYFISSTSLVMSITALLF), 99–119 (IFQFLILLCSTLCIPLSVEYI), 124–144 (MAITEFLLFVLTATLGGMFLC), 149–169 (LITIFVAPECFSLCSYLLSGY), 183–203 (YLLMGGASSSILVYGFSWLYG), 229–249 (ISIALISITVGIGFKLSPAPF), 295–315 (WHLLLEILAILSMILGNLIAI), 323–343 (MLAYSSIGQIGYVIIGIIVGD), 354–374 (YMLFYISMNLGTFACIVLFGL), 395–415 (ALSSALCLLSLGGIPPLAGFF), 418–438 (LYLFWCGWQAGLYFLVSIGLL), and 484–504 (MIVCVIASTIPGISMNPIIAI).

This sequence belongs to the complex I subunit 2 family. As to quaternary structure, NDH is composed of at least 16 different subunits, 5 of which are encoded in the nucleus.

It localises to the plastid. The protein localises to the chloroplast thylakoid membrane. The catalysed reaction is a plastoquinone + NADH + (n+1) H(+)(in) = a plastoquinol + NAD(+) + n H(+)(out). It carries out the reaction a plastoquinone + NADPH + (n+1) H(+)(in) = a plastoquinol + NADP(+) + n H(+)(out). Its function is as follows. NDH shuttles electrons from NAD(P)H:plastoquinone, via FMN and iron-sulfur (Fe-S) centers, to quinones in the photosynthetic chain and possibly in a chloroplast respiratory chain. The immediate electron acceptor for the enzyme in this species is believed to be plastoquinone. Couples the redox reaction to proton translocation, and thus conserves the redox energy in a proton gradient. In Nuphar advena (Common spatterdock), this protein is NAD(P)H-quinone oxidoreductase subunit 2 A, chloroplastic.